Here is a 374-residue protein sequence, read N- to C-terminus: Flagellar P-ring protein (374 aa).

Residues 1-29 (MPGVGISRIVRIAVAALVALAPLMTPAHA) form the signal peptide.

This sequence belongs to the FlgI family. In terms of assembly, the basal body constitutes a major portion of the flagellar organelle and consists of four rings (L,P,S, and M) mounted on a central rod.

It is found in the periplasm. The protein resides in the bacterial flagellum basal body. In terms of biological role, assembles around the rod to form the L-ring and probably protects the motor/basal body from shearing forces during rotation. This chain is Flagellar P-ring protein, found in Nitrobacter hamburgensis (strain DSM 10229 / NCIMB 13809 / X14).